The following is a 397-amino-acid chain: Tryptophan synthase beta chain (397 aa).

Lys-87 bears the N6-(pyridoxal phosphate)lysine mark.

Belongs to the TrpB family. Tetramer of two alpha and two beta chains. Pyridoxal 5'-phosphate is required as a cofactor.

The catalysed reaction is (1S,2R)-1-C-(indol-3-yl)glycerol 3-phosphate + L-serine = D-glyceraldehyde 3-phosphate + L-tryptophan + H2O. It participates in amino-acid biosynthesis; L-tryptophan biosynthesis; L-tryptophan from chorismate: step 5/5. Functionally, the beta subunit is responsible for the synthesis of L-tryptophan from indole and L-serine. This chain is Tryptophan synthase beta chain, found in Shigella boydii serotype 18 (strain CDC 3083-94 / BS512).